The sequence spans 474 residues: 3-isopropylmalate dehydratase large subunit (474 aa).

Positions 353, 414, and 417 each coordinate [4Fe-4S] cluster.

The protein belongs to the aconitase/IPM isomerase family. LeuC type 1 subfamily. In terms of assembly, heterodimer of LeuC and LeuD. [4Fe-4S] cluster serves as cofactor.

It catalyses the reaction (2R,3S)-3-isopropylmalate = (2S)-2-isopropylmalate. It participates in amino-acid biosynthesis; L-leucine biosynthesis; L-leucine from 3-methyl-2-oxobutanoate: step 2/4. Catalyzes the isomerization between 2-isopropylmalate and 3-isopropylmalate, via the formation of 2-isopropylmaleate. The chain is 3-isopropylmalate dehydratase large subunit from Xylella fastidiosa (strain M12).